The primary structure comprises 36 residues: Photosystem I reaction center subunit VIII (36 aa).

A helical transmembrane segment spans residues 6 to 26; that stretch reads LPSIFVPLVGLVFPAIAMASL.

This sequence belongs to the PsaI family.

It localises to the plastid. Its subcellular location is the chloroplast thylakoid membrane. In terms of biological role, may help in the organization of the PsaL subunit. The chain is Photosystem I reaction center subunit VIII from Liriodendron tulipifera (Tuliptree).